A 224-amino-acid chain; its full sequence is Orotate phosphoribosyltransferase (224 aa).

Lysine 29 lines the 5-phospho-alpha-D-ribose 1-diphosphate pocket. Orotate is bound at residue 37-38 (FF). 5-phospho-alpha-D-ribose 1-diphosphate contacts are provided by residues 75–76 (YK), arginine 105, lysine 106, lysine 109, histidine 111, and 130–138 (DDVITAGTS). Orotate contacts are provided by threonine 134 and arginine 162.

It belongs to the purine/pyrimidine phosphoribosyltransferase family. PyrE subfamily. As to quaternary structure, homodimer. Mg(2+) serves as cofactor.

It catalyses the reaction orotidine 5'-phosphate + diphosphate = orotate + 5-phospho-alpha-D-ribose 1-diphosphate. The protein operates within pyrimidine metabolism; UMP biosynthesis via de novo pathway; UMP from orotate: step 1/2. Catalyzes the transfer of a ribosyl phosphate group from 5-phosphoribose 1-diphosphate to orotate, leading to the formation of orotidine monophosphate (OMP). In Bordetella bronchiseptica (strain ATCC BAA-588 / NCTC 13252 / RB50) (Alcaligenes bronchisepticus), this protein is Orotate phosphoribosyltransferase.